Reading from the N-terminus, the 220-residue chain is Artemin (220 aa).

The N-terminal stretch at M1–A39 is a signal peptide. The propeptide occupies S40–R107. The segment at L41 to R121 is disordered. Pro residues-rich tracts occupy residues S47 to L58 and P81 to A98. A compositionally biased stretch (low complexity) spans L99–R121. Intrachain disulfides connect C123/C188, C150/C216, and C154/C218. N202 carries an N-linked (GlcNAc...) asparagine glycan.

It belongs to the TGF-beta family. GDNF subfamily. In terms of assembly, homodimer; disulfide-linked. Interacts with GFRA3 coreceptor and RET: forms a 2:2:2 ternary complex composed of ARTN ligand, GFRA3 and RET receptor. In terms of tissue distribution, ubiquitous. Expressed at high levels in peripheral tissues including prostate, placenta, pancreas, heart, kidney, pituitary gland, lung and testis. Expressed at low levels in the brain.

Its subcellular location is the secreted. In terms of biological role, growth factor that supports the survival of sensory and sympathetic peripheral neurons in culture and also supports the survival of dopaminergic neurons of the ventral mid-brain. Acts by binding to its coreceptor, GFRA3, leading to autophosphorylation and activation of the RET receptor. Strong attractant of gut hematopoietic cells thus promoting the formation Peyer's patch-like structures, a major component of the gut-associated lymphoid tissue. This Homo sapiens (Human) protein is Artemin.